The chain runs to 261 residues: Indole-3-glycerol phosphate synthase (261 aa).

It belongs to the TrpC family.

The catalysed reaction is 1-(2-carboxyphenylamino)-1-deoxy-D-ribulose 5-phosphate + H(+) = (1S,2R)-1-C-(indol-3-yl)glycerol 3-phosphate + CO2 + H2O. It functions in the pathway amino-acid biosynthesis; L-tryptophan biosynthesis; L-tryptophan from chorismate: step 4/5. This is Indole-3-glycerol phosphate synthase from Burkholderia thailandensis (strain ATCC 700388 / DSM 13276 / CCUG 48851 / CIP 106301 / E264).